The chain runs to 305 residues: UDP-3-O-acyl-N-acetylglucosamine deacetylase (305 aa).

Residues His-78, His-237, and Asp-241 each coordinate Zn(2+). His-264 functions as the Proton donor in the catalytic mechanism.

Belongs to the LpxC family. It depends on Zn(2+) as a cofactor.

The enzyme catalyses a UDP-3-O-[(3R)-3-hydroxyacyl]-N-acetyl-alpha-D-glucosamine + H2O = a UDP-3-O-[(3R)-3-hydroxyacyl]-alpha-D-glucosamine + acetate. It participates in glycolipid biosynthesis; lipid IV(A) biosynthesis; lipid IV(A) from (3R)-3-hydroxytetradecanoyl-[acyl-carrier-protein] and UDP-N-acetyl-alpha-D-glucosamine: step 2/6. Functionally, catalyzes the hydrolysis of UDP-3-O-myristoyl-N-acetylglucosamine to form UDP-3-O-myristoylglucosamine and acetate, the committed step in lipid A biosynthesis. This Burkholderia ambifaria (strain ATCC BAA-244 / DSM 16087 / CCUG 44356 / LMG 19182 / AMMD) (Burkholderia cepacia (strain AMMD)) protein is UDP-3-O-acyl-N-acetylglucosamine deacetylase.